Reading from the N-terminus, the 175-residue chain is Avenin-like a3 (175 aa).

The first 19 residues, 1 to 19, serve as a signal peptide directing secretion; it reads MKTMFLLALLAFTATSAVA.

The protein belongs to the prolamin family. Post-translationally, contains 7 disulfide bonds.

Seed storage protein. Not integrated in the gluten polymer through disulfide bonds, unless incorporated by reduction and reoxidation during dough making. Increases dough strength and bread volume, but decreases dough stability when added into a base wheat flour. The sequence is that of Avenin-like a3 from Triticum aestivum (Wheat).